A 494-amino-acid chain; its full sequence is SNF1-related protein kinase catalytic subunit alpha KIN12 (494 aa).

In terms of domain architecture, Protein kinase spans 19 to 270 (YRIGKTLGHG…ITEIRQHPWF (252 aa)). ATP is bound by residues 25–33 (LGHGSFAKV) and lysine 48. Aspartate 142 functions as the Proton acceptor in the catalytic mechanism. At threonine 175 the chain carries Phosphothreonine. The tract at residues 289–386 (AKKIEEEIIQ…GLKSNVKDDK (98 aa)) is auto-inhibitory domain (AID). The region spanning 291–331 (KIEEEIIQNVVNIGFDRNHVVDSLANRIQNEATVAYHLILD) is the UBA domain. The segment at 293-494 (EEEIIQNVVN…VAFLRELGVL (202 aa)) is regulatory domain (RD). The segment at 387-494 (TWTLGLQSQG…VAFLRELGVL (108 aa)) is PPI. A KA1 domain is found at 445 to 493 (AIILPTVIKFEIQLYKVREGKYLLDILRIDGPQFIFFDLCVAFLRELGV).

Belongs to the protein kinase superfamily. CAMK Ser/Thr protein kinase family. SNF1 subfamily. Subunit of a probable heterotrimeric complex consisting of an alpha catalytic subunit, and a beta (KINB) and a gamma (KING or SNF4) non-catalytic regulatory subunits. Autophosphorylated. As to expression, expressed at very low levels.

The enzyme catalyses L-seryl-[protein] + ATP = O-phospho-L-seryl-[protein] + ADP + H(+). It catalyses the reaction L-threonyl-[protein] + ATP = O-phospho-L-threonyl-[protein] + ADP + H(+). Its activity is regulated as follows. Activated by phosphorylation at Thr-175. Functionally, catalytic subunit of the probable trimeric SNF1-related protein kinase (SnRK) complex, a central regulator of cellular energy homeostasis, which, in response to seemingly unrelated darkness, sugar and stress conditions, activates energy-producing pathways and inhibits energy-consuming processes. May also be involved in the regulation of fatty acid synthesis by phosphorylation of acetyl-CoA carboxylase and in assimilation of nitrogen by phosphorylating nitrate reductase. In Arabidopsis thaliana (Mouse-ear cress), this protein is SNF1-related protein kinase catalytic subunit alpha KIN12.